A 433-amino-acid polypeptide reads, in one-letter code: Serine/threonine-protein phosphatase 2A activator 2 (433 aa).

Pro residues predominate over residues 1 to 10 (MTSQAPPQPA). Disordered stretches follow at residues 1-67 (MTSQ…NWTF) and 367-400 (SMSEDTGAGDEADVEDDPHAGHDHTGKAHDGTGW). A compositionally biased stretch (low complexity) spans 11–23 (SSPGVAAPAAASS). A compositionally biased stretch (pro residues) spans 45-59 (NPTPIPETPALPTPP). Positions 367-382 (SMSEDTGAGDEADVED) are enriched in acidic residues. Basic and acidic residues predominate over residues 383–396 (DPHAGHDHTGKAHD).

This sequence belongs to the PTPA-type PPIase family.

The protein resides in the cytoplasm. The catalysed reaction is [protein]-peptidylproline (omega=180) = [protein]-peptidylproline (omega=0). Its function is as follows. PPIases accelerate the folding of proteins. It catalyzes the cis-trans isomerization of proline imidic peptide bonds in oligopeptides. Acts as a regulatory subunit for PP2A-like phosphatases modulating their activity or substrate specificity, probably by inducing a conformational change in the catalytic subunit, a direct target of the PPIase. Can reactivate inactive phosphatase PP2A-phosphatase methylesterase complexes (PP2Ai) in presence of ATP and Mg(2+) by dissociating the inactive form from the complex. The sequence is that of Serine/threonine-protein phosphatase 2A activator 2 (RRD2) from Gibberella zeae (strain ATCC MYA-4620 / CBS 123657 / FGSC 9075 / NRRL 31084 / PH-1) (Wheat head blight fungus).